The following is a 699-amino-acid chain: Glycine--tRNA ligase beta subunit (699 aa).

It belongs to the class-II aminoacyl-tRNA synthetase family. As to quaternary structure, tetramer of two alpha and two beta subunits.

Its subcellular location is the cytoplasm. It catalyses the reaction tRNA(Gly) + glycine + ATP = glycyl-tRNA(Gly) + AMP + diphosphate. The protein is Glycine--tRNA ligase beta subunit of Methylobacterium radiotolerans (strain ATCC 27329 / DSM 1819 / JCM 2831 / NBRC 15690 / NCIMB 10815 / 0-1).